A 452-amino-acid polypeptide reads, in one-letter code: MKKTLRFAAVVSSLAAASALLAAAPAAAQALGSQGAQLADEVVAVVNNDVITGRELDQRAGLIARRLQQQNAPVPPTDQLRAQVLNQMVLERIQVQKAKDDGIRIDDATVQSTLQRLAQANGMTLEQYRGRLEAQGVPWSVFTSDARTELMLSKLREREVDGKITVSDAEVANYIASQRGPNASQQQDLRFQHIFIKAPTNAPQADIEAAQKKADALLQQAKSGADFEKLAKNNSEANDAKKGGDLGFKAPSALPADVVDAASKLRPGQVNPTLIRVPDGFEIVRLVDRRQSQGATAAAPKIVQTHVRHILLRVGEGKSEGQARQQLADIRNQVEAGGDFAKFARTYSQDGSASQGGDLGWISPGETVPEFERAMNNLQDGQISQPIRTEYGYHLIQVLSRREAEGSVQQQMDIARQAIGQRKAEQAYADWLRELRDSSYVQYKIGGVGPAN.

The signal sequence occupies residues 1 to 28 (MKKTLRFAAVVSSLAAASALLAAAPAAA). PpiC domains lie at 186–288 (QQDL…RLVD) and 302–400 (IVQT…QVLS).

Its subcellular location is the periplasm. It carries out the reaction [protein]-peptidylproline (omega=180) = [protein]-peptidylproline (omega=0). Chaperone involved in the correct folding and assembly of outer membrane proteins. Recognizes specific patterns of aromatic residues and the orientation of their side chains, which are found more frequently in integral outer membrane proteins. May act in both early periplasmic and late outer membrane-associated steps of protein maturation. The polypeptide is Chaperone SurA (Burkholderia lata (strain ATCC 17760 / DSM 23089 / LMG 22485 / NCIMB 9086 / R18194 / 383)).